We begin with the raw amino-acid sequence, 354 residues long: Selenide, water dikinase (354 aa).

The active site involves C23. Residues K26 and 54–56 each bind ATP; that span reads TSD. D57 is a Mg(2+) binding site. ATP-binding positions include D74, D97, and 145–147; that span reads GHS. D97 serves as a coordination point for Mg(2+). D233 contributes to the Mg(2+) binding site.

Belongs to the selenophosphate synthase 1 family. Class I subfamily. Homodimer. Mg(2+) is required as a cofactor.

It carries out the reaction hydrogenselenide + ATP + H2O = selenophosphate + AMP + phosphate + 2 H(+). Synthesizes selenophosphate from selenide and ATP. The chain is Selenide, water dikinase from Burkholderia orbicola (strain MC0-3).